Here is a 283-residue protein sequence, read N- to C-terminus: MLRSRVTVFGILNLTEDSFFDESRRLDPAGAVTAAIEMLRVGSDVVDVGPAASHPDARPVSPADEIRRIAPLLDALSDQMHRVSIDSFQPETQRYALKRGVGYLNDIQGFPDPALYPDIAEADCRLVVMHSAQRDGIATRTGHLRPEDALDEIVRFFEARVSALRRSGVAADRLILDPGMGFFLSPAPETSLHVLSNLQKLKSALGLPLLVSVSRKSFLGATVGLPVKDLGPASLAAELHAIGNGADYVRTHAPGDLRSAITFSETLAKFRSRDARDRGLDHA.

The Pterin-binding domain occupies 6-262; sequence VTVFGILNLT…APGDLRSAIT (257 aa). Residue Asn-13 participates in Mg(2+) binding. (7,8-dihydropterin-6-yl)methyl diphosphate-binding positions include Asp-86, Asn-105, Asp-177, Lys-216, and 250-252; that span reads RTH.

This sequence belongs to the DHPS family. As to quaternary structure, homodimer or homotrimer. Mg(2+) is required as a cofactor.

It carries out the reaction (7,8-dihydropterin-6-yl)methyl diphosphate + 4-aminobenzoate = 7,8-dihydropteroate + diphosphate. The protein operates within cofactor biosynthesis; tetrahydrofolate biosynthesis; 7,8-dihydrofolate from 2-amino-4-hydroxy-6-hydroxymethyl-7,8-dihydropteridine diphosphate and 4-aminobenzoate: step 1/2. Its function is as follows. Catalyzes the condensation of para-aminobenzoate (pABA) with 6-hydroxymethyl-7,8-dihydropterin diphosphate (DHPt-PP) to form 7,8-dihydropteroate (H2Pte), the immediate precursor of folate derivatives. Implicated in resistance to sulfonamide. The sequence is that of Dihydropteroate synthase type-1 (sulI) from Mycolicibacterium fortuitum (Mycobacterium fortuitum).